Here is a 433-residue protein sequence, read N- to C-terminus: Histone acetyltransferase type B subunit 2 (433 aa).

5 WD repeats span residues E131–T171, G184–R224, H234–A274, G281–H321, and G325–L365. Residues D367–D371 form an interaction with the histone H4 N-terminus region. The stretch at G382–D422 is one WD 6 repeat.

This sequence belongs to the WD repeat RBAP46/RBAP48/MSI1 family. As to quaternary structure, component of the HAT-B complex composed of at least HAT1 and HAT2. The HAT-B complex binds to histone H4 tail.

Its subcellular location is the cytoplasm. It is found in the nucleus. Functionally, regulatory subunit of the histone acetylase B (HAT-B) complex. The complex acetylates 'Lys-12' of histone H4 which is required for telomeric silencing. The sequence is that of Histone acetyltransferase type B subunit 2 (HAT2) from Gibberella zeae (strain ATCC MYA-4620 / CBS 123657 / FGSC 9075 / NRRL 31084 / PH-1) (Wheat head blight fungus).